Consider the following 127-residue polypeptide: Holo-[acyl-carrier-protein] synthase (127 aa).

2 residues coordinate Mg(2+): Asp-7 and Glu-56.

Belongs to the P-Pant transferase superfamily. AcpS family. Mg(2+) is required as a cofactor.

Its subcellular location is the cytoplasm. The enzyme catalyses apo-[ACP] + CoA = holo-[ACP] + adenosine 3',5'-bisphosphate + H(+). Transfers the 4'-phosphopantetheine moiety from coenzyme A to a Ser of acyl-carrier-protein. This Onion yellows phytoplasma (strain OY-M) protein is Holo-[acyl-carrier-protein] synthase.